We begin with the raw amino-acid sequence, 346 residues long: MESKTINDVVVSESNHELASSSPSEFEKNQKHYQEIIATLPHKDGWRPKDPFVEYGGHWWLQPLLEGLLHAQKFFKARPNDFFVCSYPKTGTTWLKALTFAIANRSKFDVSTNPLLKRNPHEFVPYIEIDFPFFPSVDVLKDEGNTLFSTHIPYDLLPESVVKSGCKIVYIWRDPKDTFVSMWTFAHKERSQQGPVVSIEEAFDKYCQGLSAYGPYLDHVLGYWKAYQANPDQILFLKYETMRADPLPYVKRLAEFMGYGFTKEEEEGNVVEKVVKLCSFETLKNLEANKGEKDREDRPAVYANSAYFRKGKVGDWQNYLTPEMVARIDGLMEEKFKGTGFLSSKS.

3'-phosphoadenylyl sulfate is bound at residue 89 to 94 (KTGTTW). Residue His151 is the Proton acceptor of the active site. 3'-phosphoadenylyl sulfate contacts are provided by residues Arg173, Ser181, Tyr239, and 309–311 (RKG).

The protein belongs to the sulfotransferase 1 family. Highly expressed in roots, stems and mature leaves. Low expression in young leaves and flowers. Barely detected in siliques.

The protein resides in the cytoplasm. It carries out the reaction an aliphatic (Z)-desulfo-glucosinolate + 3'-phosphoadenylyl sulfate = a (Z)-omega-(methylsulfanyl)-N-sulfo-alkylhydroximate S-glucoside + adenosine 3',5'-bisphosphate + H(+). Its activity is regulated as follows. Inhibited by phosphoadenosine 5'-phosphate (PAP). Its function is as follows. Sulfotransferase that utilizes 3'-phospho-5'-adenylyl sulfate (PAPS) as sulfonate donor to catalyze the sulfate conjugation of desulfo-glucosinolates (dsGSs), the final step in the biosynthesis of the glucosinolate core structure. Substrate preference is desulfo-benzyl glucosinolate &gt; desulfo-6-methylthiohexyl glucosinolate. Increased specific activity with increasing chain length of desulfo-glucosinolate derived from methionine. Preferred substrate is desulfo-8-methylthiooctyl glucosinolate. This chain is Cytosolic sulfotransferase 17 (SOT17), found in Arabidopsis thaliana (Mouse-ear cress).